A 241-amino-acid polypeptide reads, in one-letter code: Trypsin-10 (241 aa).

A signal peptide spans 1–13 (MKSLIFVLLLGAV). A propeptide spans 14–19 (FAEEDK) (activation peptide). Residues 20 to 239 (IVGGYECTRH…LSGWVRDTMA (220 aa)) form the Peptidase S1 domain. Intrachain disulfides connect Cys26–Cys155, Cys44–Cys60, Cys128–Cys228, Cys135–Cys201, Cys166–Cys180, and Cys191–Cys215. Active-site charge relay system residues include His59 and Asp103. The Charge relay system role is filled by Ser195.

This sequence belongs to the peptidase S1 family.

It localises to the secreted. It is found in the extracellular space. The catalysed reaction is Preferential cleavage: Arg-|-Xaa, Lys-|-Xaa.. The protein is Trypsin-10 of Gadus morhua (Atlantic cod).